The primary structure comprises 159 residues: Mating-type P-specific polypeptide Pi (159 aa).

Positions 103 to 159 (MTTVRGQCSKCTKPHLMRWLLLHYDNPYPSNSEFYDLSAATGLTRTQLRNWFSNRRR) form a DNA-binding region, homeobox; TALE-type; partial.

This sequence belongs to the TALE/M-ATYP homeobox family.

The protein localises to the nucleus. Mating type proteins are sequence specific DNA-binding proteins that act as master switches in yeast differentiation by controlling gene expression in a cell type-specific fashion. Required for meiosis, but plays no role in conjugation. The chain is Mating-type P-specific polypeptide Pi (matPi) from Schizosaccharomyces kambucha (Fission yeast).